The following is a 345-amino-acid chain: Phosphoribosylformylglycinamidine cyclo-ligase (345 aa).

Belongs to the AIR synthase family.

Its subcellular location is the cytoplasm. It carries out the reaction 2-formamido-N(1)-(5-O-phospho-beta-D-ribosyl)acetamidine + ATP = 5-amino-1-(5-phospho-beta-D-ribosyl)imidazole + ADP + phosphate + H(+). It participates in purine metabolism; IMP biosynthesis via de novo pathway; 5-amino-1-(5-phospho-D-ribosyl)imidazole from N(2)-formyl-N(1)-(5-phospho-D-ribosyl)glycinamide: step 2/2. The protein is Phosphoribosylformylglycinamidine cyclo-ligase of Shewanella oneidensis (strain ATCC 700550 / JCM 31522 / CIP 106686 / LMG 19005 / NCIMB 14063 / MR-1).